The sequence spans 423 residues: GTPase HflX (423 aa).

Residues 201 to 363 (IQLALVGYTN…KIEQALKGMM (163 aa)) enclose the Hflx-type G domain. Residues 207–214 (GYTNAGKS), 232–236 (FATLD), 254–257 (DTVG), 320–323 (NKAD), and 341–343 (SAY) contribute to the GTP site. Mg(2+) contacts are provided by S214 and T234.

This sequence belongs to the TRAFAC class OBG-HflX-like GTPase superfamily. HflX GTPase family. As to quaternary structure, monomer. Associates with the 50S ribosomal subunit. Requires Mg(2+) as cofactor.

The protein localises to the cytoplasm. GTPase that associates with the 50S ribosomal subunit and may have a role during protein synthesis or ribosome biogenesis. In Alkalihalophilus pseudofirmus (strain ATCC BAA-2126 / JCM 17055 / OF4) (Bacillus pseudofirmus), this protein is GTPase HflX.